The sequence spans 347 residues: Haptoglobin (347 aa).

Positions 1–18 (MSALGAVIALLLWGQLFA) are cleaved as a signal peptide. One can recognise a Sushi domain in the interval 31 to 88 (DGCPKPPEIANGYVEHLVRYQCKKYYRLRTEGDGVYTLNNEKQWTNKAVGDKLPECEA). 4 disulfides stabilise this stretch: C52–C86, C90–C207, C250–C281, and C292–C322. Positions 103–345 (ILGGHLDAKG…IQDWVQKTIA (243 aa)) constitute a Peptidase S1 domain. Residues N125, N148, N152, and N182 are each glycosylated (N-linked (GlcNAc...) asparagine). The interval 259 to 264 (VPEKKT) is interaction with CD163.

Belongs to the peptidase S1 family. Tetramer of two alpha and two beta chains; disulfide-linked. The hemoglobin/haptoglobin complex is composed of a haptoglobin dimer bound to two hemoglobin alpha-beta dimers. Interacts with CD163. Interacts with ERGIC3. Expressed by the liver and secreted in plasma.

The protein localises to the secreted. As a result of hemolysis, hemoglobin is found to accumulate in the kidney and is secreted in the urine. Haptoglobin captures, and combines with free plasma hemoglobin to allow hepatic recycling of heme iron and to prevent kidney damage. Haptoglobin also acts as an antioxidant, has antibacterial activity and plays a role in modulating many aspects of the acute phase response. Hemoglobin/haptoglobin complexes are rapidly cleared by the macrophage CD163 scavenger receptor expressed on the surface of liver Kupfer cells through an endocytic lysosomal degradation pathway. This Ateles geoffroyi (Black-handed spider monkey) protein is Haptoglobin (HP).